The chain runs to 287 residues: Nucleotide-binding protein GM21_3387 (287 aa).

Position 8-15 (8-15 (GLSGSGKS)) interacts with ATP. 59–62 (DIRS) is a binding site for GTP.

It belongs to the RapZ-like family.

Its function is as follows. Displays ATPase and GTPase activities. The protein is Nucleotide-binding protein GM21_3387 of Geobacter sp. (strain M21).